The primary structure comprises 123 residues: UPF0102 protein Mflv_4140 (123 aa).

This sequence belongs to the UPF0102 family.

This Mycolicibacterium gilvum (strain PYR-GCK) (Mycobacterium gilvum (strain PYR-GCK)) protein is UPF0102 protein Mflv_4140.